The primary structure comprises 80 residues: Large ribosomal subunit protein bL31B (80 aa).

Belongs to the bacterial ribosomal protein bL31 family. Type B subfamily. As to quaternary structure, part of the 50S ribosomal subunit.

The chain is Large ribosomal subunit protein bL31B from Methylobacillus flagellatus (strain ATCC 51484 / DSM 6875 / VKM B-1610 / KT).